The sequence spans 21 residues: Peptide PGLa-B2 (21 aa).

L21 bears the Leucine amide mark.

Expressed by the skin glands.

The protein localises to the secreted. In terms of biological role, has antimicrobial activity against Gram-negative bacterium E.coli ATCC 25922 (MIC=25 uM), Gram-positive bacterium S.auerus ATCC 25923 (MIC=50 uM) and against fungus C.albicans ATCC 90028 (MIC=25 uM). Has some hemolytic activity against human erythrocytes at high concentration. The chain is Peptide PGLa-B2 from Xenopus borealis (Kenyan clawed frog).